The primary structure comprises 234 residues: Sugar fermentation stimulation protein homolog (234 aa).

It belongs to the SfsA family.

This Shewanella piezotolerans (strain WP3 / JCM 13877) protein is Sugar fermentation stimulation protein homolog.